The sequence spans 559 residues: Potassium-transporting ATPase potassium-binding subunit (559 aa).

The next 13 helical transmembrane spans lie at glycine 5–serine 25, leucine 27–tryptophan 47, leucine 63–tryptophan 83, glycine 132–isoleucine 152, leucine 170–isoleucine 190, leucine 253–alanine 273, leucine 283–valine 303, phenylalanine 327–valine 347, alanine 356–valine 376, glycine 379–glycine 399, methionine 416–methionine 436, leucine 484–alanine 504, and glycine 524–isoleucine 544.

The protein belongs to the KdpA family. As to quaternary structure, the system is composed of three essential subunits: KdpA, KdpB and KdpC.

The protein resides in the cell inner membrane. Part of the high-affinity ATP-driven potassium transport (or Kdp) system, which catalyzes the hydrolysis of ATP coupled with the electrogenic transport of potassium into the cytoplasm. This subunit binds the periplasmic potassium ions and delivers the ions to the membrane domain of KdpB through an intramembrane tunnel. This Salmonella heidelberg (strain SL476) protein is Potassium-transporting ATPase potassium-binding subunit.